A 283-amino-acid polypeptide reads, in one-letter code: Phosphatidylglycerol--prolipoprotein diacylglyceryl transferase (283 aa).

The next 4 helical transmembrane spans lie at 20-40 (LGPV…FVAM), 51-71 (GGNP…GIIG), 97-117 (ITNG…AVYF), and 123-143 (GVAF…AQAI). An a 1,2-diacyl-sn-glycero-3-phospho-(1'-sn-glycerol)-binding site is contributed by R145. 2 helical membrane passes run 192–212 (VHPT…VLLW) and 255–275 (INVI…FALR).

It belongs to the Lgt family.

It localises to the cell membrane. It carries out the reaction L-cysteinyl-[prolipoprotein] + a 1,2-diacyl-sn-glycero-3-phospho-(1'-sn-glycerol) = an S-1,2-diacyl-sn-glyceryl-L-cysteinyl-[prolipoprotein] + sn-glycerol 1-phosphate + H(+). It functions in the pathway protein modification; lipoprotein biosynthesis (diacylglyceryl transfer). Catalyzes the transfer of the diacylglyceryl group from phosphatidylglycerol to the sulfhydryl group of the N-terminal cysteine of a prolipoprotein, the first step in the formation of mature lipoproteins. The protein is Phosphatidylglycerol--prolipoprotein diacylglyceryl transferase of Corynebacterium diphtheriae (strain ATCC 700971 / NCTC 13129 / Biotype gravis).